A 694-amino-acid chain; its full sequence is Elongation factor G 1 (694 aa).

Residues 5-280 (SRYRNIGIFA…AVVDYLPDPT (276 aa)) form the tr-type G domain. Residues 14–21 (AHVDAGKT), 78–82 (DTPGH), and 132–135 (NKLD) contribute to the GTP site.

Belongs to the TRAFAC class translation factor GTPase superfamily. Classic translation factor GTPase family. EF-G/EF-2 subfamily.

Its subcellular location is the cytoplasm. In terms of biological role, catalyzes the GTP-dependent ribosomal translocation step during translation elongation. During this step, the ribosome changes from the pre-translocational (PRE) to the post-translocational (POST) state as the newly formed A-site-bound peptidyl-tRNA and P-site-bound deacylated tRNA move to the P and E sites, respectively. Catalyzes the coordinated movement of the two tRNA molecules, the mRNA and conformational changes in the ribosome. The sequence is that of Elongation factor G 1 from Methylococcus capsulatus (strain ATCC 33009 / NCIMB 11132 / Bath).